The following is a 434-amino-acid chain: Methylenetetrahydrofolate--tRNA-(uracil-5-)-methyltransferase TrmFO (434 aa).

Residue 9–14 participates in FAD binding; sequence GAGLAG.

Belongs to the MnmG family. TrmFO subfamily. Requires FAD as cofactor.

It is found in the cytoplasm. It catalyses the reaction uridine(54) in tRNA + (6R)-5,10-methylene-5,6,7,8-tetrahydrofolate + NADH + H(+) = 5-methyluridine(54) in tRNA + (6S)-5,6,7,8-tetrahydrofolate + NAD(+). It carries out the reaction uridine(54) in tRNA + (6R)-5,10-methylene-5,6,7,8-tetrahydrofolate + NADPH + H(+) = 5-methyluridine(54) in tRNA + (6S)-5,6,7,8-tetrahydrofolate + NADP(+). Functionally, catalyzes the folate-dependent formation of 5-methyl-uridine at position 54 (M-5-U54) in all tRNAs. This Bacillus licheniformis (strain ATCC 14580 / DSM 13 / JCM 2505 / CCUG 7422 / NBRC 12200 / NCIMB 9375 / NCTC 10341 / NRRL NRS-1264 / Gibson 46) protein is Methylenetetrahydrofolate--tRNA-(uracil-5-)-methyltransferase TrmFO.